Consider the following 278-residue polypeptide: Tryptophan synthase alpha chain (278 aa).

Active-site proton acceptor residues include E50 and D61.

The protein belongs to the TrpA family. Tetramer of two alpha and two beta chains.

The catalysed reaction is (1S,2R)-1-C-(indol-3-yl)glycerol 3-phosphate + L-serine = D-glyceraldehyde 3-phosphate + L-tryptophan + H2O. It participates in amino-acid biosynthesis; L-tryptophan biosynthesis; L-tryptophan from chorismate: step 5/5. The alpha subunit is responsible for the aldol cleavage of indoleglycerol phosphate to indole and glyceraldehyde 3-phosphate. The sequence is that of Tryptophan synthase alpha chain from Methylorubrum populi (strain ATCC BAA-705 / NCIMB 13946 / BJ001) (Methylobacterium populi).